The following is a 963-amino-acid chain: Protocadherin alpha-C1 (963 aa).

Residues 1–18 (MVGWGVAVLCLWVSCGAA) form the signal peptide. Cadherin domains follow at residues 19–124 (AGQL…SPLF), 125–233 (PAGD…APVF), 234–340 (ERSV…APEL), 349–445 (VPED…TPSF), and 446–555 (PQPQ…YPVI). Over 19 to 683 (AGQLEYSVPE…GGQLSAQNLY (665 aa)) the chain is Extracellular. The N-linked (GlcNAc...) asparagine glycan is linked to N38. Residues N248 and N274 are each glycosylated (N-linked (GlcNAc...) asparagine). N562 carries an N-linked (GlcNAc...) asparagine glycan. The Cadherin 6 domain maps to 570-667 (VPRSARTGHL…NSVPQLLPDF (98 aa)). The helical transmembrane segment at 684-704 (LVIALACISFLFLGCLLFFVC) threads the bilayer. Residues 705 to 963 (TKLHQSPGCC…GNSTTDNSDQ (259 aa)) are Cytoplasmic-facing. PXXP repeat units lie at residues 812-815 (PRQP), 845-848 (PGGP), 886-889 (PGNP), and 904-907 (PGSP). The tract at residues 812–907 (PRQPNPDWRY…PDKFIIPGSP (96 aa)) is 4 X 4 AA repeats of P-X-X-P. The interval 844-902 (GPGGPDQQWPTVSSATPEPEAGEVSPPVGAGVNSNSWTFKYGPGNPKQSGPGELPDKFI) is disordered. Residues 914-963 (QEPANSQIDKSDFITFGKKEETKKKKKKKKGNKTQEKKEKGNSTTDNSDQ) form a disordered region. The span at 922-936 (DKSDFITFGKKEETK) shows a compositional bias: basic and acidic residues.

It localises to the cell membrane. Potential calcium-dependent cell-adhesion protein. May be involved in the establishment and maintenance of specific neuronal connections in the brain. The polypeptide is Protocadherin alpha-C1 (PCDHAC1) (Pan troglodytes (Chimpanzee)).